A 502-amino-acid chain; its full sequence is MTRLILAIDQGTTSTRALLFRPDTRIAALAQAEFPQHFPASGWVEHEPEDLWRSTLDTCRAALRQAGAGAREVAAIGITNQRETTLIWDRRTGEAVHRAIVWQDRRTAGLCARLKEQGHEPLVSERTGLLLDPYFAGTKIAWILDQVPGARARADAGELAFGTVDSYLLWRLTGGRVHVTDATNASRTLLFDIHRGAWDDDLLRLFDIPRSLLPEVRDSSGDFGTTDPDLFGAPIPIRGVAGDQQAATVGQACFRPGMVKSTYGTGCFALLNTGPQPVASRNKLLTTIAYQLGGERTYALEGSIFVAGAAVQWLRDGLGVVASAAETGDLAERADPAQEVYLVPAFVGLGAPYWEPDVRGALYGLTRGTRPAELARAALESVCYQTADLLAAMRADWPDGDGSGTVLRVDGGMVASDWTMQRLADLLAAPVDRPEVKETTALGAAYLAGLACGLYPEPERFADHWRLERRFTPAMDGPVRERKLAGWRKAVGCLLGRPVPLP.

Threonine 12 serves as a coordination point for ADP. The ATP site is built by threonine 12, threonine 13, and serine 14. Residue threonine 12 coordinates sn-glycerol 3-phosphate. Position 16 (arginine 16) interacts with ADP. Positions 82, 83, 134, and 243 each coordinate sn-glycerol 3-phosphate. The glycerol site is built by arginine 82, glutamate 83, tyrosine 134, aspartate 243, and glutamine 244. ADP is bound by residues threonine 265 and glycine 308. 4 residues coordinate ATP: threonine 265, glycine 308, glutamine 312, and glycine 412. Glycine 412 contributes to the ADP binding site.

Belongs to the FGGY kinase family.

The enzyme catalyses glycerol + ATP = sn-glycerol 3-phosphate + ADP + H(+). It functions in the pathway polyol metabolism; glycerol degradation via glycerol kinase pathway; sn-glycerol 3-phosphate from glycerol: step 1/1. Inhibited by fructose 1,6-bisphosphate (FBP). Its function is as follows. Key enzyme in the regulation of glycerol uptake and metabolism. Catalyzes the phosphorylation of glycerol to yield sn-glycerol 3-phosphate. This is Glycerol kinase from Methylobacterium nodulans (strain LMG 21967 / CNCM I-2342 / ORS 2060).